Consider the following 1371-residue polypeptide: Perilipin-4 (1371 aa).

Positions 1-13 are enriched in basic and acidic residues; that stretch reads MSAPDEGRRDPPK. Residues 1–22 are disordered; the sequence is MSAPDEGRRDPPKPKGKTLGSF. Phosphoserine occurs at positions 25 and 31. A disordered region spans residues 37–86; that stretch reads ANAHSSARARPAADPTGAPAAEAAQPQAQVAAHPEQTAPWTEKELQPSEK. Over residues 44–72 the composition is skewed to low complexity; the sequence is RARPAADPTGAPAAEAAQPQAQVAAHPEQ. A run of 27 repeats spans residues 109 to 141, 142 to 174, 175 to 207, 208 to 240, 241 to 273, 274 to 306, 307 to 339, 340 to 372, 373 to 405, 406 to 438, 439 to 471, 472 to 504, 505 to 537, 538 to 570, 571 to 603, 604 to 636, 637 to 669, 670 to 702, 703 to 735, 736 to 768, 769 to 801, 802 to 834, 835 to 867, 868 to 900, 901 to 933, 934 to 966, and 967 to 999. The interval 109–999 is 27 X 33 AA approximate tandem repeat; sequence GVASVVDVAK…LMGTKDTVFS (891 aa). Polar residues predominate over residues 1060–1083; it reads PATSWGGLTSSRTTDNGGEQTALS. 2 disordered regions span residues 1060-1093 and 1240-1260; these read PATSWGGLTSSRTTDNGGEQTALSPQEAPFSGIS and QAPEGQPRLDQGSGASAEDAA.

Belongs to the perilipin family.

It localises to the cell membrane. The protein localises to the cytoplasm. Its subcellular location is the lipid droplet. May play a role in triacylglycerol packaging into adipocytes. May function as a coat protein involved in the biogenesis of lipid droplets. This is Perilipin-4 from Homo sapiens (Human).